The following is an 83-amino-acid chain: Spanin, outer lipoprotein subunit (83 aa).

The first 50 residues, 1–50 (MSTLRELRLRRALKEQSMKYRLSIKKTLPRWKGALIGLFLICVRTISGSG), serve as a signal peptide directing secretion.

Belongs to the T7likevirus o-spanin family. Homodimer. Interacts (via C-terminus) with the spanin inner membrane subunit (via C-terminus). Part of the spanin complex which spans the entire periplasmic space. The spanin complex is composed of spanin inner membrane subunit and spanin outer membrane subunit.

The protein resides in the host cell outer membrane. Functionally, component of the spanin complex that disrupts the host outer membrane and participates in cell lysis during virus exit. The spanin complex conducts the final step in host lysis by disrupting the outer membrane after holin and endolysin action have permeabilized the inner membrane and degraded the host peptidoglycans. Host outer membrane disruption is possibly due to local fusion between the inner and outer membrane performed by the spanin complex. This chain is Spanin, outer lipoprotein subunit (18.7), found in Escherichia coli (Bacteriophage T3).